Reading from the N-terminus, the 100-residue chain is UPF0213 protein YhbQ (100 aa).

The region spanning Thr-2 to Arg-77 is the GIY-YIG domain.

Belongs to the UPF0213 family.

The protein is UPF0213 protein YhbQ of Escherichia coli O127:H6 (strain E2348/69 / EPEC).